A 770-amino-acid chain; its full sequence is Metallothionein expression activator (770 aa).

Residues 77 to 97 (LVPSPKTGDGSSDKKNIDRTW) are disordered. 5 positions are modified to phosphoserine: S80, S122, S247, S249, and S253. At T259 the chain carries Phosphothreonine. A disordered region spans residues 286-323 (PPPTLISPRMSNTSINGSPSRKYHRQRYPNKSPESNGL). A compositionally biased stretch (polar residues) spans 294-304 (RMSNTSINGSP). 3 positions are modified to phosphoserine: S385, S392, and S483. Phosphothreonine is present on residues T486 and T501. S564 is modified (phosphoserine). C2H2-type zinc fingers lie at residues 603-627 (FECLYPNCNKVFKRRYNIRSHIQTH) and 633-657 (YSCDFPGCTKAFVRNHDLIRHKISH). The C2H2-type 3; atypical zinc-finger motif lies at 662–685 (YICPCGKRFNREDALMVHRSRMIC). The disordered stretch occupies residues 699 to 770 (LTSPKKSLLD…RTLSNETDAL (72 aa)). Residues 705 to 745 (SLLDSPHDTSPVKETIARDKDGSVLMKMEEQLRDDMRKHGL) are compositionally biased toward basic and acidic residues. 2 positions are modified to phosphoserine: S709 and S714. Polar residues predominate over residues 754-770 (AHEQNSNRTLSNETDAL).

It localises to the nucleus. Plays a role in regulating basal-level expression of CUP1. Activates EGT2 transcription in the absence of SWI5. The sequence is that of Metallothionein expression activator (ACE2) from Saccharomyces cerevisiae (strain ATCC 204508 / S288c) (Baker's yeast).